The sequence spans 307 residues: G-protein coupled receptor 35 (307 aa).

Topologically, residues 1 to 18 (MNSTTCNSTLTWPASVNN) are extracellular. Asparagine 2 and asparagine 7 each carry an N-linked (GlcNAc...) asparagine glycan. Residues 19 to 39 (FFIIYSALLLVLGLLLNSVAL) traverse the membrane as a helical segment. Residues 40 to 53 (WVFCYRMHQWTETR) lie on the Cytoplasmic side of the membrane. A helical transmembrane segment spans residues 54–74 (IYMTNLAVADLCLLCSLPFVL). Residues 75 to 88 (YSLKYSSSDTPVCQ) are Extracellular-facing. Cysteine 87 and cysteine 160 form a disulfide bridge. Residues 89 to 110 (LSQGIYLANRYMSISLVTAIAV) form a helical membrane-spanning segment. Residues 111-129 (DRYVAVRHPLRARELRSPR) are Cytoplasmic-facing. The helical transmembrane segment at 130–150 (QAAAVCVALWVIVVTSLVVRW) threads the bilayer. At 151–176 (RLGMQEGGFCFSSQTRRNFSTTAFSL) the chain is on the extracellular side. Residues 177 to 197 (LGFYLPLAIVVFCSLQVVTVL) form a helical membrane-spanning segment. Topologically, residues 198-217 (SRRPAADVGQAEATQKATHM) are cytoplasmic. A helical transmembrane segment spans residues 218–238 (VWANLAVFVICFLPLHVVLTV). Residues 239–257 (QVSLNLNTCAARDTFSRAL) lie on the Extracellular side of the membrane. Residues 258 to 278 (SITGKLSDTNCCLDAICYYYM) traverse the membrane as a helical segment. At 279 to 307 (AREFQEASKPATSSNTPHKSQDSQILSLT) the chain is on the cytoplasmic side. 4 positions are modified to phosphoserine: serine 286, serine 292, serine 298, and serine 301. Residues 288-307 (PATSSNTPHKSQDSQILSLT) form a disordered region.

The protein belongs to the G-protein coupled receptor 1 family. Multiply phosphorylated in clusters of serines and threonines in the C-terminal tail. Phosphorylation of Ser-298 and Ser-301 is mediated by GRK5 and/or GRK6. As to expression, predominantly expressed in immune and gastrointestinal tissues. Strongly GPR35 expressed in colonic macrophages.

It is found in the cell membrane. In terms of biological role, G-protein coupled receptor that binds to several ligands including the tryptophan metabolite kynurenic acid (KYNA), lysophosphatidic acid (LPA) or 5-hydroxyindoleacetic acid (5-HIAA) with high affinity, leading to rapid and transient activation of numerous intracellular signaling pathways. Plays a role in neutrophil recruitment to sites of inflammation and bacterial clearance through the major serotonin metabolite 5-HIAA that acts as a physiological ligand. Stimulates lipid metabolism, thermogenic, and anti-inflammatory gene expression in adipose tissue once activated by kynurenic acid. In macrophages, activation by lysophosphatidic acid promotes GPR35-induced signaling with a distinct transcriptional profile characterized by TNF production associated with ERK and NF-kappa-B activation. In turn, induces chemotaxis of macrophages. This Mus musculus (Mouse) protein is G-protein coupled receptor 35 (Gpr35).